Here is a 410-residue protein sequence, read N- to C-terminus: Polyprenol-phosphate-mannose-dependent alpha-(1-2)-phosphatidylinositol pentamannoside mannosyltransferase (410 aa).

10 consecutive transmembrane segments (helical) span residues 31–51 (LAPMLLVVSILARLAWTYLVP), 96–116 (FAAIVFYPLHLLPFGVVAFIW), 160–180 (TFDYGQVNVVLVLAVLCAVST), 188–208 (LLVGLAAGIKLTPAVAGLYFL), 214–234 (AAVACSAAVFFATVGVSWLVV), 276–296 (GFGPLVLIGIGITAVLALLAW), 306–326 (LGGILVVSLFGLVLSPISWTH), 328–348 (WVWLIPLMMWLLHGPLSALRG), 351–371 (ILGWGWLALTLLGVPWLLSFA), and 384–404 (LAWAGLVYIVATLATLGWIAF).

It belongs to the glycosyltransferase 87 family.

It is found in the cell membrane. It functions in the pathway phospholipid metabolism; phosphatidylinositol metabolism. Catalyzes the alpha-1,2 addition of a mannose residue from polyprenol-phosphate-mannose (PPM) to a monoacyl phosphatidylinositol tetramannoside (AcPIM4) to generate a monoacyl phosphatidylinositol pentamannoside (AcPIM5). The sequence is that of Polyprenol-phosphate-mannose-dependent alpha-(1-2)-phosphatidylinositol pentamannoside mannosyltransferase from Mycolicibacterium smegmatis (strain ATCC 700084 / mc(2)155) (Mycobacterium smegmatis).